A 753-amino-acid chain; its full sequence is Eukaryotic translation initiation factor 3 subunit B (753 aa).

One can recognise an RRM domain in the interval 42-129; sequence TMLVVDNIPI…NVLHVNRFGD (88 aa). WD repeat units lie at residues 142-185, 203-241, 321-362, 537-580, and 595-640; these read DLPS…WWNG, NSKW…GPIG, DTQS…LLDR, LDSK…DERR, and GEHY…LLHE. Residues 723 to 753 are a coiled coil; sequence KSKAKIDVKGQEARVEEWVEELIDETEELSM.

The protein belongs to the eIF-3 subunit B family. Component of the eukaryotic translation initiation factor 3 (eIF-3) complex.

The protein resides in the cytoplasm. In terms of biological role, RNA-binding component of the eukaryotic translation initiation factor 3 (eIF-3) complex, which is involved in protein synthesis of a specialized repertoire of mRNAs and, together with other initiation factors, stimulates binding of mRNA and methionyl-tRNAi to the 40S ribosome. The eIF-3 complex specifically targets and initiates translation of a subset of mRNAs involved in cell proliferation. This is Eukaryotic translation initiation factor 3 subunit B from Cryptococcus neoformans var. neoformans serotype D (strain B-3501A) (Filobasidiella neoformans).